A 137-amino-acid chain; its full sequence is MLQPKRTKFRKAFKGRIHGAAKGGFELSFGQFGLKALEPERITARQIEAARRAMTRHMKRAGRVWIRIFPDVPVSKKPTEVRMGKGKGAPELWAVRVAPGRIMFELDGVPVDLAREALQLASAKLPIKTRFIQRIQE.

Belongs to the universal ribosomal protein uL16 family. In terms of assembly, part of the 50S ribosomal subunit.

Binds 23S rRNA and is also seen to make contacts with the A and possibly P site tRNAs. This chain is Large ribosomal subunit protein uL16, found in Methylocella silvestris (strain DSM 15510 / CIP 108128 / LMG 27833 / NCIMB 13906 / BL2).